The primary structure comprises 424 residues: Multifunctional CCA protein (424 aa).

Gly-8 and Arg-11 together coordinate ATP. Gly-8 and Arg-11 together coordinate CTP. Mg(2+)-binding residues include Asp-21 and Asp-23. The ATP site is built by Arg-91, Arg-149, and Arg-152. The CTP site is built by Arg-91, Arg-149, and Arg-152. Positions 238–339 (TGIHLMMVLD…VRLLERCDAF (102 aa)) constitute an HD domain.

This sequence belongs to the tRNA nucleotidyltransferase/poly(A) polymerase family. Bacterial CCA-adding enzyme type 1 subfamily. As to quaternary structure, monomer. Can also form homodimers and oligomers. Requires Mg(2+) as cofactor. The cofactor is Ni(2+).

It catalyses the reaction a tRNA precursor + 2 CTP + ATP = a tRNA with a 3' CCA end + 3 diphosphate. It carries out the reaction a tRNA with a 3' CCA end + 2 CTP + ATP = a tRNA with a 3' CCACCA end + 3 diphosphate. In terms of biological role, catalyzes the addition and repair of the essential 3'-terminal CCA sequence in tRNAs without using a nucleic acid template. Adds these three nucleotides in the order of C, C, and A to the tRNA nucleotide-73, using CTP and ATP as substrates and producing inorganic pyrophosphate. tRNA 3'-terminal CCA addition is required both for tRNA processing and repair. Also involved in tRNA surveillance by mediating tandem CCA addition to generate a CCACCA at the 3' terminus of unstable tRNAs. While stable tRNAs receive only 3'-terminal CCA, unstable tRNAs are marked with CCACCA and rapidly degraded. The polypeptide is Multifunctional CCA protein (Polaromonas naphthalenivorans (strain CJ2)).